We begin with the raw amino-acid sequence, 481 residues long: Chromosomal replication initiator protein DnaA (481 aa).

Residues 1–71 (MTDLSAFWPQ…ETFAEDILGR (71 aa)) form a domain I, interacts with DnaA modulators region. A domain II region spans residues 71 to 143 (RPVTIELRIG…PAIGGGHEST (73 aa)). A compositionally biased stretch (low complexity) spans 86–96 (ASAPAAASPRS). Residues 86-110 (ASAPAAASPRSPGRPAPAPVAATPT) are disordered. Residues 144-361 (RLNPAFTFES…GALKRVVAYS (218 aa)) form a domain III, AAA+ region region. Glycine 189, glycine 191, lysine 192, and threonine 193 together coordinate ATP. The segment at 362–481 (RFSNQPISLD…YAALQQMLRN (120 aa)) is domain IV, binds dsDNA.

Belongs to the DnaA family. As to quaternary structure, oligomerizes as a right-handed, spiral filament on DNA at oriC.

The protein localises to the cytoplasm. Plays an essential role in the initiation and regulation of chromosomal replication. ATP-DnaA binds to the origin of replication (oriC) to initiate formation of the DNA replication initiation complex once per cell cycle. Binds the DnaA box (a 9 base pair repeat at the origin) and separates the double-stranded (ds)DNA. Forms a right-handed helical filament on oriC DNA; dsDNA binds to the exterior of the filament while single-stranded (ss)DNA is stabiized in the filament's interior. The ATP-DnaA-oriC complex binds and stabilizes one strand of the AT-rich DNA unwinding element (DUE), permitting loading of DNA polymerase. After initiation quickly degrades to an ADP-DnaA complex that is not apt for DNA replication. Binds acidic phospholipids. This is Chromosomal replication initiator protein DnaA from Laribacter hongkongensis (strain HLHK9).